Consider the following 38-residue polypeptide: DNA binding protein ORF8 (38 aa).

The protein belongs to the microviridae J protein family.

The protein resides in the virion. Its subcellular location is the host cytoplasm. Its function is as follows. Mediates ssDNA packaging into virion, it locates to the internal surface of the capsid, thereby displacing the internal scaffolding protein during virion formation. Additionally, protein ORF8 plays a role in viral attachment to the host cell. The sequence is that of DNA binding protein ORF8 from Spiroplasma melliferum (SpV4).